A 308-amino-acid chain; its full sequence is uncharacterized protein (308 aa).

The 67-residue stretch at 15-81 (MRVDTGLARL…QNTPIDIEGM (67 aa)) folds into the S4 RNA-binding domain. Asp-139 is an active-site residue.

The protein belongs to the pseudouridine synthase RluA family.

It catalyses the reaction a uridine in RNA = a pseudouridine in RNA. This is an uncharacterized protein from Mycobacterium tuberculosis (strain CDC 1551 / Oshkosh).